The sequence spans 79 residues: Conotoxin TsMSGL-2 (79 aa).

The signal sequence occupies residues Met-1–Ala-24. Positions Gly-25–Arg-46 are excised as a propeptide. 3 cysteine pairs are disulfide-bonded: Cys-52–Cys-64, Cys-56–Cys-73, and Cys-63–Cys-77. Residue Leu-78 is modified to Leucine amide.

It belongs to the conotoxin O3 superfamily. In terms of tissue distribution, expressed by the venom duct.

It localises to the secreted. The sequence is that of Conotoxin TsMSGL-2 from Conus tessulatus (Tessellate cone).